The sequence spans 60 residues: UPF0434 protein Dtpsy_1553 (60 aa).

Belongs to the UPF0434 family.

This is UPF0434 protein Dtpsy_1553 from Acidovorax ebreus (strain TPSY) (Diaphorobacter sp. (strain TPSY)).